Consider the following 406-residue polypeptide: Protein ALP1-like (406 aa).

Residues 8 to 15 carry the Nuclear localization signal motif; that stretch reads KKKKRAEK. The DDE Tnp4 domain occupies 187 to 353; it reads IDITHIVMNL…IIFVCCLLHN (167 aa). Residues Asp188, Asp240, and Asp279 each contribute to the a divalent metal cation site.

It belongs to the HARBI1 family. A divalent metal cation is required as a cofactor.

It is found in the nucleus. Its function is as follows. Transposase-derived protein that may have nuclease activity. This is Protein ALP1-like from Arabidopsis thaliana (Mouse-ear cress).